A 76-amino-acid polypeptide reads, in one-letter code: Signal recognition particle 9 kDa protein (76 aa).

This sequence belongs to the SRP9 family. Heterodimer with SRP14; binds RNA as heterodimer. Component of a signal recognition particle complex that consists of a 7SL RNA molecule of 300 nucleotides and six protein subunits: srpa-72, srpa-68, SRP54, F37F2.2/SRP19, F25G6.8/SRP14 and ZK512.4/SRP9.

The protein localises to the cytoplasm. Functionally, component of the signal recognition particle (SRP) complex, a ribonucleoprotein complex that mediates the cotranslational targeting of secretory and membrane proteins to the endoplasmic reticulum (ER). SRP9 together with SRP14 and the Alu portion of the SRP RNA, constitutes the elongation arrest domain of SRP. The complex of SRP9 and SRP14 is required for SRP RNA binding. The polypeptide is Signal recognition particle 9 kDa protein (Caenorhabditis elegans).